A 422-amino-acid polypeptide reads, in one-letter code: E3 ubiquitin-protein ligase CBLL2 (422 aa).

The segment at 54 to 94 (CDKCDLPIKIYGRIIPCKHAFCYNCANLYDKIGYKICPRCS) adopts an RING-type zinc-finger fold. Positions 93–151 (CSYPVLRIEEHKRGSVFMCSVVQGCKRTYLSQKSLQAHIKRRHKRARKQVASASLEKLR) are HYB domain. The C2H2-type zinc-finger motif lies at 109–135 (FMCSVVQGCKRTYLSQKSLQAHIKRRH). 2 disordered regions span residues 190–213 (MQQMPHEQHNQPHKDLQVPPPELS) and 378–422 (QTDA…HRPY). Residues 195–205 (HEQHNQPHKDL) are compositionally biased toward basic and acidic residues. Over residues 393–405 (LPPPPPTWSPPPS) the composition is skewed to pro residues. The span at 410–422 (GSHHSYQRRHRPY) shows a compositional bias: basic residues.

Homodimer.

The protein localises to the cytoplasm. It catalyses the reaction S-ubiquitinyl-[E2 ubiquitin-conjugating enzyme]-L-cysteine + [acceptor protein]-L-lysine = [E2 ubiquitin-conjugating enzyme]-L-cysteine + N(6)-ubiquitinyl-[acceptor protein]-L-lysine.. The protein operates within protein modification; protein ubiquitination. In terms of biological role, E3 ubiquitin ligase catalyzing the covalent attachment of ubiquitin moieties onto substrate proteins. May operate on tyrosine-phosphorylated SRC substrates. The protein is E3 ubiquitin-protein ligase CBLL2 (CBLL2) of Macaca fascicularis (Crab-eating macaque).